Here is a 250-residue protein sequence, read N- to C-terminus: GTP cyclohydrolase 1 (250 aa).

Basic and acidic residues-rich tracts occupy residues M1 to R14 and P35 to A44. A disordered region spans residues M1 to N64. S60 and S81 each carry phosphoserine. C141, H144, and C212 together coordinate Zn(2+).

The protein belongs to the GTP cyclohydrolase I family. As to quaternary structure, toroid-shaped homodecamer, composed of a dimer of pentamers. The inactive isoforms also form decamers and may possibly be incorporated into GCH1 heterodecamers, decreasing enzyme stability and activity. Interacts with AHSA1 and GCHFR/GFRP. Post-translationally, phosphorylated by casein kinase II at Ser-81 in HAECs during oscillatory shear stress; phosphorylation at Ser-81 results in increased enzyme activity. In epidermis, expressed predominantly in basal undifferentiated keratinocytes and in some but not all melanocytes (at protein level).

It localises to the cytoplasm. It is found in the nucleus. It carries out the reaction GTP + H2O = 7,8-dihydroneopterin 3'-triphosphate + formate + H(+). It functions in the pathway cofactor biosynthesis; 7,8-dihydroneopterin triphosphate biosynthesis; 7,8-dihydroneopterin triphosphate from GTP: step 1/1. With respect to regulation, GTP shows a positive allosteric effect, and tetrahydrobiopterin inhibits the enzyme activity. Zinc is required for catalytic activity. Inhibited by Mg(2+). Functionally, positively regulates nitric oxide synthesis in umbilical vein endothelial cells (HUVECs). May be involved in dopamine synthesis. May modify pain sensitivity and persistence. Isoform GCH-1 is the functional enzyme, the potential function of the enzymatically inactive isoforms remains unknown. The sequence is that of GTP cyclohydrolase 1 (GCH1) from Homo sapiens (Human).